Here is a 269-residue protein sequence, read N- to C-terminus: MSNTDASGEKRVTGTSERREQIIQRLRQQGSVQVNDLSALYGVSTVTIRNDLAFLEKQGIAVRAYGGALICDSTTPSVEPSVEDKSALNTAMKRSVAKAAVELIQPGHRVILDSGTTTFEIARLMRKHTDVIAMTNGMNVANALLEAEGVELLMTGGHLRRQSQSFYGDQAEQSLQNYHFDMLFLGVDAIDLERGVSTHNEDEARLNRRMCEVAERIIVVTDSSKFNRSSLHKIIDTQRIDMIIVDEGIPADSLEGLRKAGVEVILVGE.

The HTH deoR-type domain maps to 15–70 (TSERREQIIQRLRQQGSVQVNDLSALYGVSTVTIRNDLAFLEKQGIAVRAYGGALI). The H-T-H motif DNA-binding region spans 32–51 (VQVNDLSALYGVSTVTIRND).

In terms of biological role, probable repressor for the aga operon for N-acetyl galactosamine transport and metabolism. This is Putative aga operon transcriptional repressor (agaR) from Escherichia coli O157:H7.